A 133-amino-acid chain; its full sequence is Small ribosomal subunit protein uS8 (133 aa).

Belongs to the universal ribosomal protein uS8 family. Part of the 30S ribosomal subunit. Contacts proteins S5 and S12.

One of the primary rRNA binding proteins, it binds directly to 16S rRNA central domain where it helps coordinate assembly of the platform of the 30S subunit. The sequence is that of Small ribosomal subunit protein uS8 from Trichodesmium erythraeum (strain IMS101).